The following is a 184-amino-acid chain: MKTAQEIRVGNVIMYGKDPMVVLRTEYSRGGRNSSTVRMKLKSLIANFNTEVVYKADDKLEQVILDKKECTYSYFAEPMYICMDTEYNQYEVEAENMGDSLNYLEDGMELEVVFYNEKAISVEMPTNVVREITWTEPAVKGDTSGKVLKPAKISTGFDVGVPIFVAQGDKVEIDTRTGEYRKRV.

It belongs to the elongation factor P family.

Its subcellular location is the cytoplasm. It participates in protein biosynthesis; polypeptide chain elongation. Functionally, involved in peptide bond synthesis. Stimulates efficient translation and peptide-bond synthesis on native or reconstituted 70S ribosomes in vitro. Probably functions indirectly by altering the affinity of the ribosome for aminoacyl-tRNA, thus increasing their reactivity as acceptors for peptidyl transferase. In Albidiferax ferrireducens (strain ATCC BAA-621 / DSM 15236 / T118) (Rhodoferax ferrireducens), this protein is Elongation factor P.